Here is a 447-residue protein sequence, read N- to C-terminus: Hydroxymethylglutaryl-CoA synthase (447 aa).

The Proton donor/acceptor role is filled by Glu-86. The active-site Acyl-thioester intermediate is Cys-118. Cys-118, Asn-156, Thr-160, Ser-210, His-250, Lys-259, Asn-327, and Ser-361 together coordinate (3S)-3-hydroxy-3-methylglutaryl-CoA. The active-site Proton donor/acceptor is His-250. Residue Thr-398 is modified to Phosphothreonine.

The protein belongs to the thiolase-like superfamily. HMG-CoA synthase family.

It catalyses the reaction acetoacetyl-CoA + acetyl-CoA + H2O = (3S)-3-hydroxy-3-methylglutaryl-CoA + CoA + H(+). It participates in metabolic intermediate biosynthesis; (R)-mevalonate biosynthesis; (R)-mevalonate from acetyl-CoA: step 2/3. Its function is as follows. Hydroxymethylglutaryl-CoA synthase; part of the first module of ergosterol biosynthesis pathway that includes the early steps of the pathway, conserved across all eukaryotes, and which results in the formation of mevalonate from acetyl-coenzyme A (acetyl-CoA). Hcs1 condenses acetyl-CoA with acetoacetyl-CoA to form hydroxymethylglutaryl-CoA (HMG-CoA). The first module starts with the action of the cytosolic acetyl-CoA acetyltransferase eg10 that catalyzes the formation of acetoacetyl-CoA. The hydroxymethylglutaryl-CoA synthases erg13 then condenses acetyl-CoA with acetoacetyl-CoA to form HMG-CoA. The rate-limiting step of the early module is the reduction to mevalonate by the 3-hydroxy-3-methylglutaryl-coenzyme A (HMG-CoA) reductases hcs1. This chain is Hydroxymethylglutaryl-CoA synthase, found in Schizosaccharomyces pombe (strain 972 / ATCC 24843) (Fission yeast).